We begin with the raw amino-acid sequence, 824 residues long: Acyl-homoserine lactone acylase QuiP (824 aa).

An N-terminal signal peptide occupies residues 1–26 (MASPALRHFLPRFGAAAAAASFLSLA). Catalysis depends on Ser264, which acts as the Nucleophile.

This sequence belongs to the peptidase S45 family. As to quaternary structure, heterodimer of an alpha subunit and a beta subunit processed from the same precursor.

It is found in the periplasm. The catalysed reaction is an N-acyl-L-homoserine lactone + H2O = L-homoserine lactone + a carboxylate. Functionally, catalyzes the deacylation of acyl-homoserine lactone (AHL or acyl-HSL), releasing homoserine lactone (HSL) and the corresponding fatty acid. Possesses a specificity for the degradation of long-chain acyl-HSLs (side chains of seven or more carbons in length). This chain is Acyl-homoserine lactone acylase QuiP (quiP), found in Pseudomonas syringae pv. syringae (strain B728a).